The chain runs to 313 residues: tRNA dimethylallyltransferase (313 aa).

9–16 (GPTASGKT) provides a ligand contact to ATP. 11-16 (TASGKT) lines the substrate pocket. The tract at residues 34–37 (DSMQ) is interaction with substrate tRNA.

It belongs to the IPP transferase family. Monomer. The cofactor is Mg(2+).

The catalysed reaction is adenosine(37) in tRNA + dimethylallyl diphosphate = N(6)-dimethylallyladenosine(37) in tRNA + diphosphate. Its function is as follows. Catalyzes the transfer of a dimethylallyl group onto the adenine at position 37 in tRNAs that read codons beginning with uridine, leading to the formation of N6-(dimethylallyl)adenosine (i(6)A). The polypeptide is tRNA dimethylallyltransferase (Acetivibrio thermocellus (strain ATCC 27405 / DSM 1237 / JCM 9322 / NBRC 103400 / NCIMB 10682 / NRRL B-4536 / VPI 7372) (Clostridium thermocellum)).